Here is a 193-residue protein sequence, read N- to C-terminus: Putative 3-methyladenine DNA glycosylase (193 aa).

This sequence belongs to the DNA glycosylase MPG family.

In Francisella tularensis subsp. holarctica (strain FTNF002-00 / FTA), this protein is Putative 3-methyladenine DNA glycosylase.